The primary structure comprises 603 residues: NADH-ubiquinone oxidoreductase chain 5 (603 aa).

The next 16 membrane-spanning stretches (helical) occupy residues 4 to 24 (LPTLTLISLIILTSPIMLSPL), 38 to 58 (MAVSYAFMVSMVPAMIFMHSG), 87 to 107 (LIFMPVALFVTWSIMEFSLWY), 117 to 137 (FFKYLLLFLITMIILITANNL), 140 to 160 (LFIGWEGVGIMSFLLIGWWYG), 171 to 191 (AMIYNRIGDVGFVAAMAWFLL), 211 to 233 (LPLTGLLLAAMGKSAQFGLHPWL), 241 to 261 (TPVSALLHSSTMVVAGVFLLI), 273 to 293 (ILTLTLCVGAITTLFTAICAL), 301 to 320 (IIAFSTSSQLGLMMVTIGIN), 331 to 351 (THAFFKAMLFMCSGSIIHSLG), 366 to 386 (LPFTTTALIIGSLALTGMPFL), 409 to 429 (LLITFIATSMTAVYSTRIIFF), 457 to 477 (LMLGSIFAGFLISSNLPPTTV), 488 to 508 (FMALAVTLLGFALAIELSSFT), and 583 to 603 (MIKLYFLSFLISLTLGLLLII).

The protein belongs to the complex I subunit 5 family.

It is found in the mitochondrion inner membrane. It carries out the reaction a ubiquinone + NADH + 5 H(+)(in) = a ubiquinol + NAD(+) + 4 H(+)(out). Its function is as follows. Core subunit of the mitochondrial membrane respiratory chain NADH dehydrogenase (Complex I) that is believed to belong to the minimal assembly required for catalysis. Complex I functions in the transfer of electrons from NADH to the respiratory chain. The immediate electron acceptor for the enzyme is believed to be ubiquinone. This is NADH-ubiquinone oxidoreductase chain 5 (MT-ND5) from Dugong dugon (Dugong).